Reading from the N-terminus, the 617-residue chain is Probable translation initiation factor IF-2 (617 aa).

A tr-type G domain is found at 14 to 231 (LRQPIVVVLG…VLAGLTQTYL (218 aa)). Residues 23–30 (GHVDHGKT) are G1. 23–30 (GHVDHGKT) contributes to the GTP binding site. The interval 48 to 52 (GITQH) is G2. Residues 87 to 90 (DTPG) form a G3 region. GTP-binding positions include 87–91 (DTPGH) and 141–144 (NKID). Residues 141-144 (NKID) form a G4 region. The interval 209–211 (SAR) is G5.

This sequence belongs to the TRAFAC class translation factor GTPase superfamily. Classic translation factor GTPase family. IF-2 subfamily.

In terms of biological role, function in general translation initiation by promoting the binding of the formylmethionine-tRNA to ribosomes. Seems to function along with eIF-2. The chain is Probable translation initiation factor IF-2 (infB) from Aeropyrum pernix (strain ATCC 700893 / DSM 11879 / JCM 9820 / NBRC 100138 / K1).